A 338-amino-acid polypeptide reads, in one-letter code: Nicotinate-nucleotide--dimethylbenzimidazole phosphoribosyltransferase (338 aa).

The active-site Proton acceptor is the Glu305.

This sequence belongs to the CobT family.

It catalyses the reaction 5,6-dimethylbenzimidazole + nicotinate beta-D-ribonucleotide = alpha-ribazole 5'-phosphate + nicotinate + H(+). It participates in nucleoside biosynthesis; alpha-ribazole biosynthesis; alpha-ribazole from 5,6-dimethylbenzimidazole: step 1/2. In terms of biological role, catalyzes the synthesis of alpha-ribazole-5'-phosphate from nicotinate mononucleotide (NAMN) and 5,6-dimethylbenzimidazole (DMB). This chain is Nicotinate-nucleotide--dimethylbenzimidazole phosphoribosyltransferase, found in Sinorhizobium fredii (strain NBRC 101917 / NGR234).